The primary structure comprises 356 residues: Peptide chain release factor 1 (356 aa).

Q232 bears the N5-methylglutamine mark.

The protein belongs to the prokaryotic/mitochondrial release factor family. Post-translationally, methylated by PrmC. Methylation increases the termination efficiency of RF1.

It localises to the cytoplasm. In terms of biological role, peptide chain release factor 1 directs the termination of translation in response to the peptide chain termination codons UAG and UAA. The polypeptide is Peptide chain release factor 1 (Thermoanaerobacter pseudethanolicus (strain ATCC 33223 / 39E) (Clostridium thermohydrosulfuricum)).